A 54-amino-acid polypeptide reads, in one-letter code: Ovomucoid (54 aa).

The Kazal-like domain maps to 4 to 54 (VDCSEYPKPVCSPEYMPLCGSDSKTYNNKCDFCSAVVESNGTLTLGHFGKC). Intrachain disulfides connect Cys-6–Cys-36, Cys-14–Cys-33, and Cys-22–Cys-54. A glycan (N-linked (GlcNAc...) asparagine) is linked at Asn-43.

It localises to the secreted. In Casuarius casuarius (Southern cassowary), this protein is Ovomucoid.